We begin with the raw amino-acid sequence, 75 residues long: Defensin-like protein (75 aa).

Positions 1–24 are cleaved as a signal peptide; it reads MEKKSIAGLCFLFLVLFVAQEVVV. Disulfide bonds link cysteine 31/cysteine 75, cysteine 42/cysteine 63, cysteine 48/cysteine 69, and cysteine 52/cysteine 71.

This sequence belongs to the DEFL family.

The protein localises to the secreted. This protein is required for germination. In Vigna unguiculata (Cowpea), this protein is Defensin-like protein.